The following is a 446-amino-acid chain: Probable glycine dehydrogenase (decarboxylating) subunit 1 (446 aa).

This sequence belongs to the GcvP family. N-terminal subunit subfamily. The glycine cleavage system is composed of four proteins: P, T, L and H. In this organism, the P 'protein' is a heterodimer of two subunits.

The catalysed reaction is N(6)-[(R)-lipoyl]-L-lysyl-[glycine-cleavage complex H protein] + glycine + H(+) = N(6)-[(R)-S(8)-aminomethyldihydrolipoyl]-L-lysyl-[glycine-cleavage complex H protein] + CO2. Functionally, the glycine cleavage system catalyzes the degradation of glycine. The P protein binds the alpha-amino group of glycine through its pyridoxal phosphate cofactor; CO(2) is released and the remaining methylamine moiety is then transferred to the lipoamide cofactor of the H protein. The protein is Probable glycine dehydrogenase (decarboxylating) subunit 1 of Desulforamulus reducens (strain ATCC BAA-1160 / DSM 100696 / MI-1) (Desulfotomaculum reducens).